The primary structure comprises 423 residues: 5-hydroxytryptamine receptor 1A (423 aa).

The disordered stretch occupies residues 1–20; sequence MEGLSPGQGNNTTSSEGPFG. Residues 1–38 are Extracellular-facing; that stretch reads MEGLSPGQGNNTTSSEGPFGTRGNATGISDVTFSYQVI. Over residues 7–16 the composition is skewed to polar residues; it reads GQGNNTTSSE. 3 N-linked (GlcNAc...) asparagine glycosylation sites follow: N10, N11, and N24. The helical transmembrane segment at 39 to 59 threads the bilayer; sequence TSLLLGTLIFCAVLGNACVVA. Topologically, residues 60-73 are cytoplasmic; it reads AIALERSLQNVANY. A helical transmembrane segment spans residues 74 to 98; the sequence is LIGSLAVTDLMVSVLVLPMAALYQV. Residues 99–107 are Extracellular-facing; sequence LNKWTLGQV. The chain crosses the membrane as a helical span at residues 108 to 132; that stretch reads TCDLFIALDVLCCTSSILHLCAIAL. A disulfide bond links C109 and C187. 2 residues coordinate serotonin: D116 and C120. Residues 133 to 135 carry the DRY motif; important for ligand-induced conformation changes motif; that stretch reads DRY. The Cytoplasmic segment spans residues 133–152; it reads DRYWAITDPIDYVNKRTPRR. A helical transmembrane segment spans residues 153–174; it reads AAALISLTWLIGFLISIPPMLG. The Extracellular portion of the chain corresponds to 175–193; it reads WRTPEDRSDPDACTISKDH. Residues 194–216 traverse the membrane as a helical segment; it reads GYTIYSTFGAFYIPLLLMLVLYG. Residues 217 to 346 lie on the Cytoplasmic side of the membrane; the sequence is RIFRAARFRI…LARERKTVKT (130 aa). The tract at residues 235–277 is disordered; the sequence is RKGADARSGVSPAPQPRKSVNGEPGGREWRQGPGSKAGGPLCT. 1D-myo-inositol 4-phosphate contacts are provided by K345, T346, and G352. Residues 347 to 370 form a helical membrane-spanning segment; that stretch reads LGIIMGTFILCWLPFFIVALVLPF. At 371 to 378 the chain is on the extracellular side; sequence CESSCHMP. The chain crosses the membrane as a helical span at residues 379-403; that stretch reads TLLGAIINWLGYSNSLLNPVIYAYF. The short motif at 396–400 is the NPxxY motif; important for ligand-induced conformation changes and signaling element; the sequence is NPVIY. Residues F403, N404, and K405 each coordinate 1D-myo-inositol 4-phosphate. The Cytoplasmic segment spans residues 404–423; sequence NKDFQNAFKKIVRCKFCRRR.

The protein belongs to the G-protein coupled receptor 1 family. 5-hydroxytryptamine receptor subfamily. HTR1A sub-subfamily. In terms of assembly, heterodimer; heterodimerizes with GPER1. Interacts with YIF1B. Interacts with GPR39 and GALR1.

It is found in the cell membrane. Its subcellular location is the cell projection. It localises to the dendrite. G-protein coupled receptor activity is regulated by lipids: phosphatidylinositol 4-phosphate increases HTR1A-mediated activity. Its function is as follows. G-protein coupled receptor for 5-hydroxytryptamine (serotonin). Also functions as a receptor for various drugs and psychoactive substances. Ligand binding causes a conformation change that triggers signaling via guanine nucleotide-binding proteins (G proteins) and modulates the activity of downstream effectors, such as adenylate cyclase. HTR1A is coupled to G(i)/G(o) G alpha proteins and mediates inhibitory neurotransmission: signaling inhibits adenylate cyclase activity and activates a phosphatidylinositol-calcium second messenger system that regulates the release of Ca(2+) ions from intracellular stores. Beta-arrestin family members regulate signaling by mediating both receptor desensitization and resensitization processes. The sequence is that of 5-hydroxytryptamine receptor 1A (HTR1A) from Vulpes vulpes (Red fox).